The chain runs to 283 residues: 4-hydroxy-3-methylbut-2-enyl diphosphate reductase (283 aa).

Residue cysteine 12 coordinates [4Fe-4S] cluster. (2E)-4-hydroxy-3-methylbut-2-enyl diphosphate is bound by residues histidine 40 and histidine 72. Dimethylallyl diphosphate is bound by residues histidine 40 and histidine 72. Isopentenyl diphosphate is bound by residues histidine 40 and histidine 72. Position 94 (cysteine 94) interacts with [4Fe-4S] cluster. Histidine 122 lines the (2E)-4-hydroxy-3-methylbut-2-enyl diphosphate pocket. Histidine 122 is a binding site for dimethylallyl diphosphate. Histidine 122 lines the isopentenyl diphosphate pocket. Glutamate 124 serves as the catalytic Proton donor. Threonine 160 contacts (2E)-4-hydroxy-3-methylbut-2-enyl diphosphate. Cysteine 188 is a binding site for [4Fe-4S] cluster. (2E)-4-hydroxy-3-methylbut-2-enyl diphosphate contacts are provided by serine 216, asparagine 218, and serine 259. The dimethylallyl diphosphate site is built by serine 216, asparagine 218, and serine 259. Residues serine 216, asparagine 218, and serine 259 each contribute to the isopentenyl diphosphate site.

The protein belongs to the IspH family. [4Fe-4S] cluster serves as cofactor.

The enzyme catalyses isopentenyl diphosphate + 2 oxidized [2Fe-2S]-[ferredoxin] + H2O = (2E)-4-hydroxy-3-methylbut-2-enyl diphosphate + 2 reduced [2Fe-2S]-[ferredoxin] + 2 H(+). It carries out the reaction dimethylallyl diphosphate + 2 oxidized [2Fe-2S]-[ferredoxin] + H2O = (2E)-4-hydroxy-3-methylbut-2-enyl diphosphate + 2 reduced [2Fe-2S]-[ferredoxin] + 2 H(+). The protein operates within isoprenoid biosynthesis; dimethylallyl diphosphate biosynthesis; dimethylallyl diphosphate from (2E)-4-hydroxy-3-methylbutenyl diphosphate: step 1/1. It participates in isoprenoid biosynthesis; isopentenyl diphosphate biosynthesis via DXP pathway; isopentenyl diphosphate from 1-deoxy-D-xylulose 5-phosphate: step 6/6. Its function is as follows. Catalyzes the conversion of 1-hydroxy-2-methyl-2-(E)-butenyl 4-diphosphate (HMBPP) into a mixture of isopentenyl diphosphate (IPP) and dimethylallyl diphosphate (DMAPP). Acts in the terminal step of the DOXP/MEP pathway for isoprenoid precursor biosynthesis. The polypeptide is 4-hydroxy-3-methylbut-2-enyl diphosphate reductase (Dictyoglomus thermophilum (strain ATCC 35947 / DSM 3960 / H-6-12)).